Consider the following 44-residue polypeptide: Small, acid-soluble spore protein N (44 aa).

The segment at 1 to 44 (MGNPKKNSKDFVPNHIGTQSKKAGGNKGKQMQDTTGKQPIVDNG) is disordered.

Belongs to the SspN family.

Its subcellular location is the spore core. In Bacillus cytotoxicus (strain DSM 22905 / CIP 110041 / 391-98 / NVH 391-98), this protein is Small, acid-soluble spore protein N.